A 73-amino-acid chain; its full sequence is Excelsatoxin A (73 aa).

The signal sequence occupies residues 1–20; the sequence is MRFALVAAITIALLVAGSVA. Positions 21 to 37 are excised as a propeptide; sequence DESSEDIDNIVIKTPLD. Disulfide bonds link Cys41–Cys58, Cys46–Cys60, and Cys54–Cys69.

It belongs to the gympietide family. As to expression, expressed in trichomes, that are stiff epidermal hairs located on the surface of petioles and leaves. Not expressed in other aerial parts.

It localises to the secreted. Functionally, neurotoxin certainly responsible for the defensive, persistent, and painful stings of the giant stinging tree. Inhibits inactivation of Nav1.7/SCN9A sodium channel in sensory neurons by directly interacting with TMEM233, a newly described Nav-interacting protein. Has virtually no effect on Nav1.7/SCN9A function in heterologous expression systems and in neurons that do not express TMEM233. Also weakly but significantly affects Nav1.8/SCN10A. Coexpression of TMEM233 with Nav also confers ExTxA sensitivity to Nav1.1-Nav1.6. On the Nav1.7/SCN9A channel, causes a significant hyperpolarizing shift in the voltage dependence of activation. Its effects on Nav currents are irreversible, with no apparent reduction in activity even after repeated wash steps over 30 minutes. Does not show activity on Nav1.9/SCN11A. Does not show insecticidal activities. In vivo, induces nocifensive behavior in mice (licking or biting and shaking or lifting of the affected paw) lasting for approximately 1 hour. This chain is Excelsatoxin A, found in Dendrocnide excelsa (Giant stinging tree).